Here is a 127-residue protein sequence, read N- to C-terminus: Profilin (127 aa).

Belongs to the profilin family. As to quaternary structure, occurs in many kinds of cells as a complex with monomeric actin in a 1:1 ratio.

It is found in the cytoplasm. It localises to the cytoskeleton. Its function is as follows. Binds to actin and affects the structure of the cytoskeleton. At high concentrations, profilin prevents the polymerization of actin, whereas it enhances it at low concentrations. By binding to PIP2, it inhibits the formation of IP3 and DG. In S.pombe, it is essential for cytokinesis. In Schizosaccharomyces pombe (strain 972 / ATCC 24843) (Fission yeast), this protein is Profilin (cdc3).